The sequence spans 245 residues: Carboxymethylenebutenolidase homolog (245 aa).

Residue A2 is modified to N-acetylalanine. N6-acetyllysine is present on K36. Active-site residues include C132, D179, and H212. S223 is modified (phosphoserine).

This sequence belongs to the dienelactone hydrolase family.

Its subcellular location is the cytoplasm. It is found in the cytosol. Its function is as follows. Cysteine hydrolase. This is Carboxymethylenebutenolidase homolog (CMBL) from Pongo abelii (Sumatran orangutan).